Consider the following 352-residue polypeptide: Putative [LysW]-L-2-aminoadipate/[LysW]-L-glutamate phosphate reductase (352 aa).

Residues 10–13 (SGFT) and 34–36 (SRK) contribute to the NADP(+) site. Cys-151 is an active-site residue. Asn-319 contributes to the NADP(+) binding site.

It belongs to the NAGSA dehydrogenase family. Type 1 subfamily. LysY sub-subfamily.

The protein resides in the cytoplasm. The catalysed reaction is [amino-group carrier protein]-C-terminal-N-(1-carboxy-5-oxopentan-1-yl)-L-glutamine + phosphate + NADP(+) = [amino-group carrier protein]-C-terminal-N-(1-carboxy-5-phosphooxy-5-oxopentan-1-yl)-L-glutamine + NADPH + H(+). It carries out the reaction [amino-group carrier protein]-C-terminal-gamma-(L-glutamyl-5-semialdehyde)-L-glutamate + phosphate + NADP(+) = [amino-group carrier protein]-C-terminal-gamma-(5-phospho-L-glutamyl)-L-glutamate + NADPH + H(+). Its pathway is amino-acid biosynthesis; L-lysine biosynthesis via AAA pathway; L-lysine from L-alpha-aminoadipate (Thermus route): step 3/5. It participates in amino-acid biosynthesis; L-arginine biosynthesis. Involved in both the arginine and lysine biosynthetic pathways. In Pyrobaculum neutrophilum (strain DSM 2338 / JCM 9278 / NBRC 100436 / V24Sta) (Thermoproteus neutrophilus), this protein is Putative [LysW]-L-2-aminoadipate/[LysW]-L-glutamate phosphate reductase.